We begin with the raw amino-acid sequence, 613 residues long: Replication protein E1 (613 aa).

The segment at 1–31 (MDPNLKGITGQSFLDDQAECSESDNSEQGCE) is disordered. Over residues 16–31 (DQAECSESDNSEQGCE) the composition is skewed to acidic residues. The short motif at 71–73 (KRK) is the Nuclear localization signal element. A phosphoserine; by host mark is found at Ser-77 and Ser-92. The tract at residues 128–152 (YGSLASQSLSGQSQKNGKNRVNNGN) is disordered. Positions 129 to 152 (GSLASQSLSGQSQKNGKNRVNNGN) are enriched in low complexity. The segment at 150–317 (NGNKENIDCT…TSITHQIQED (168 aa)) is DNA-binding region. An SF3 helicase domain is found at 413-566 (YQNINFLSFL…FPLDENGKPA (154 aa)). 442–449 (GPPNTGKS) is an ATP binding site. A compositionally biased stretch (acidic residues) spans 588–597 (TEPEDEDDGD). The tract at residues 588–613 (TEPEDEDDGDPPSPFRCSARAAARDL) is disordered.

Belongs to the papillomaviridae E1 protein family. In terms of assembly, can form hexamers. Interacts with E2 protein; this interaction increases E1 DNA binding specificity. Interacts with host DNA polymerase subunit POLA2. Interacts with host single stranded DNA-binding protein RPA1. Interacts with host TOP1; this interaction stimulates the enzymatic activity of TOP1. Phosphorylated.

The protein localises to the host nucleus. The catalysed reaction is Couples ATP hydrolysis with the unwinding of duplex DNA by translocating in the 3'-5' direction.. It carries out the reaction ATP + H2O = ADP + phosphate + H(+). Its function is as follows. ATP-dependent DNA 3'-5' helicase required for initiation of viral DNA replication. It forms a complex with the viral E2 protein. The E1-E2 complex binds to the replication origin which contains binding sites for both proteins. During the initial step, a dimer of E1 interacts with a dimer of protein E2 leading to a complex that binds the viral origin of replication with high specificity. Then, a second dimer of E1 displaces the E2 dimer in an ATP-dependent manner to form the E1 tetramer. Following this, two E1 monomers are added to each half of the site, which results in the formation of two E1 trimers on the viral ori. Subsequently, two hexamers will be created. The double hexamer acts as a bi-directional helicase machinery and unwinds the viral DNA and then recruits the host DNA polymerase to start replication. This Bos taurus (Bovine) protein is Replication protein E1.